Consider the following 1178-residue polypeptide: DNA-directed RNA polymerase subunit beta (1178 aa).

Residues M1–N37 are disordered. Low complexity predominate over residues S18 to P33.

This sequence belongs to the RNA polymerase beta chain family. The RNAP catalytic core consists of 2 alpha, 1 beta, 1 beta' and 1 omega subunit. When a sigma factor is associated with the core the holoenzyme is formed, which can initiate transcription.

The enzyme catalyses RNA(n) + a ribonucleoside 5'-triphosphate = RNA(n+1) + diphosphate. Its function is as follows. DNA-dependent RNA polymerase catalyzes the transcription of DNA into RNA using the four ribonucleoside triphosphates as substrates. The chain is DNA-directed RNA polymerase subunit beta from Mycobacterium tuberculosis (strain CDC 1551 / Oshkosh).